Consider the following 260-residue polypeptide: Adenosylcobinamide-GDP ribazoletransferase (260 aa).

A run of 8 helical transmembrane segments spans residues alanine 3–tryptophan 23, phenylalanine 36–isoleucine 56, tryptophan 60–leucine 80, valine 108–leucine 128, leucine 133–methionine 153, alanine 180–valine 200, methionine 206–leucine 226, and glycine 239–alanine 259.

It belongs to the CobS family. Mg(2+) is required as a cofactor.

It is found in the cell inner membrane. It carries out the reaction alpha-ribazole + adenosylcob(III)inamide-GDP = adenosylcob(III)alamin + GMP + H(+). The catalysed reaction is alpha-ribazole 5'-phosphate + adenosylcob(III)inamide-GDP = adenosylcob(III)alamin 5'-phosphate + GMP + H(+). The protein operates within cofactor biosynthesis; adenosylcobalamin biosynthesis; adenosylcobalamin from cob(II)yrinate a,c-diamide: step 7/7. Joins adenosylcobinamide-GDP and alpha-ribazole to generate adenosylcobalamin (Ado-cobalamin). Also synthesizes adenosylcobalamin 5'-phosphate from adenosylcobinamide-GDP and alpha-ribazole 5'-phosphate. This is Adenosylcobinamide-GDP ribazoletransferase from Prochlorococcus marinus (strain MIT 9313).